Reading from the N-terminus, the 152-residue chain is Transcriptional regulator MraZ (152 aa).

SpoVT-AbrB domains are found at residues 5-52 and 81-124; these read ASAI…PLEA and AHEC…DEAA.

Belongs to the MraZ family. In terms of assembly, forms oligomers.

It localises to the cytoplasm. It is found in the nucleoid. The polypeptide is Transcriptional regulator MraZ (Shewanella loihica (strain ATCC BAA-1088 / PV-4)).